Consider the following 212-residue polypeptide: Pyridoxine/pyridoxamine 5'-phosphate oxidase (212 aa).

Residues 7-10 (RREY) and Lys66 each bind substrate. Residues 61-66 (RIVLLK), 76-77 (YT), Lys83, and Gln105 each bind FMN. Residues Tyr123, Arg127, and Ser131 each contribute to the substrate site. Residues 140–141 (QS) and Trp185 contribute to the FMN site. 191-193 (RLH) is a binding site for substrate. Arg195 provides a ligand contact to FMN.

The protein belongs to the pyridoxamine 5'-phosphate oxidase family. As to quaternary structure, homodimer. FMN serves as cofactor.

It carries out the reaction pyridoxamine 5'-phosphate + O2 + H2O = pyridoxal 5'-phosphate + H2O2 + NH4(+). The catalysed reaction is pyridoxine 5'-phosphate + O2 = pyridoxal 5'-phosphate + H2O2. It functions in the pathway cofactor metabolism; pyridoxal 5'-phosphate salvage; pyridoxal 5'-phosphate from pyridoxamine 5'-phosphate: step 1/1. Its pathway is cofactor metabolism; pyridoxal 5'-phosphate salvage; pyridoxal 5'-phosphate from pyridoxine 5'-phosphate: step 1/1. Its function is as follows. Catalyzes the oxidation of either pyridoxine 5'-phosphate (PNP) or pyridoxamine 5'-phosphate (PMP) into pyridoxal 5'-phosphate (PLP). This is Pyridoxine/pyridoxamine 5'-phosphate oxidase from Idiomarina loihiensis (strain ATCC BAA-735 / DSM 15497 / L2-TR).